A 521-amino-acid polypeptide reads, in one-letter code: Cytochrome P450 monooxygenase ARMGADRAFT_1018420 (521 aa).

A helical transmembrane segment spans residues 9–26 (VSPIWILTAIVVVAYTTV). Cys-443 provides a ligand contact to heme. N-linked (GlcNAc...) asparagine glycosylation occurs at Asn-450.

It belongs to the cytochrome P450 family. The cofactor is heme.

The protein resides in the membrane. Its pathway is secondary metabolite biosynthesis. Its function is as follows. Cytochrome P450 monooxygenase, part of the gene cluster that mediates the biosynthesis of melleolides, a range of antifungal and phytotoxic polyketide derivatives composed of an orsellinic acid (OA) moiety esterified to various sesquiterpene alcohols. The first step in melleolides biosynthesis is performed by the delta(6)-protoilludene synthase PRO1 which catalyzes the cyclization of farnesyl diphosphate to protoilludene. The orsellinic acid synthase armB produces OA by condensing acetyl-CoA with 3 malonyl-CoA units in a three-round chain elongation reaction folowed by a C2-C7 ring closure. ArmB further catalyzes the trans-esterification of OA to the various sesquiterpene alcohols resulting from the hydroxylation of protoilludene. The melleolides cluster also includes 5 cytochrome P450 monooxygenases, 4 NAD(+)-dependent oxidoreductases, one flavin-dependent oxidoreductase, and one O-methyltransferase. The cytochrome P450 monooxygenases may be involved in protoilludene hydroxylation to elaborate melleolides with multiple alcohol groups, such as melleolide D, which carries alcohol functionalities at C-4, C-5, C-10, and C-13. The role of the NAD(+)-dependent enzymes remains unknown. Numerous melleolides, including arnamial, show 5'-O-methylation of the aromatic moiety which may be catalyzed by the methyltransferase encoded in the cluster. The flavin-dependent oxidoreductase might represent the dehydrogenase yielding the aldehyde in position 1 of arnamial and other melleolides. Finally, several halogenase localized outside of the cluster, are able to catalyze the transfer of a single chlorine atom to the melleolide backbone, resulting in a 6'-chloromelleolide product. In Armillaria gallica (Bulbous honey fungus), this protein is Cytochrome P450 monooxygenase ARMGADRAFT_1018420.